The sequence spans 227 residues: Cytidylate kinase (227 aa).

Residue 12–20 (GPSGSGKGT) participates in ATP binding.

Belongs to the cytidylate kinase family. Type 1 subfamily.

The protein localises to the cytoplasm. The catalysed reaction is CMP + ATP = CDP + ADP. It carries out the reaction dCMP + ATP = dCDP + ADP. This Nitrosococcus oceani (strain ATCC 19707 / BCRC 17464 / JCM 30415 / NCIMB 11848 / C-107) protein is Cytidylate kinase.